The following is a 486-amino-acid chain: MDITRLTIKEARKLLDNREISALELTRTYLDRINTLDGKVESYLSVTEDMALKQAEQAQNLIDYGKASLLTGIPLSIKDNICIEGTKTTCASKMLEDFVSPYTATAVDKLFADNAVILGKTNLDEFAMGGSTENSAFKITKNPFDLTRVPGGSSGGSAACVSASLALGSLGSDTGGSVRQPASFCGVVGMKPTYGLVSRYGLVAFASSFDQIGPIAKTVEDCAIILDSICGNDPKDATSLKYENDSSYSSSVSGDIKGFKFGLPKEYLTEGLNAEVKESLYKSIDKLESMGAKIEEFSMPVLKHAVPAYYLMSSAEASSNLSRYDGVKYGYRADNCKSFNELIGKSRAEGFGKEVKRRILLGTYSLASGYYDAYYKKALKLRTLISNGFNEAFTKYDVVLHPTTPETAFKIGQNSNSPLAMYLADIYTVAVNIAGLPSISLPCGYDSNGLPIGLSFTGKPLGEKDIFRAAASFEAEFSDKFRVPAI.

Active-site charge relay system residues include Lys78 and Ser153. Ser177 (acyl-ester intermediate) is an active-site residue.

Belongs to the amidase family. GatA subfamily. In terms of assembly, heterotrimer of A, B and C subunits.

It catalyses the reaction L-glutamyl-tRNA(Gln) + L-glutamine + ATP + H2O = L-glutaminyl-tRNA(Gln) + L-glutamate + ADP + phosphate + H(+). Its function is as follows. Allows the formation of correctly charged Gln-tRNA(Gln) through the transamidation of misacylated Glu-tRNA(Gln) in organisms which lack glutaminyl-tRNA synthetase. The reaction takes place in the presence of glutamine and ATP through an activated gamma-phospho-Glu-tRNA(Gln). This chain is Glutamyl-tRNA(Gln) amidotransferase subunit A, found in Ruminiclostridium cellulolyticum (strain ATCC 35319 / DSM 5812 / JCM 6584 / H10) (Clostridium cellulolyticum).